A 317-amino-acid chain; its full sequence is MAELACFCYPHLENDSYRFIPFNSLAIKCMLTAKVDKKDQDKFYNSIIYGIAPPPQFKKRYNTSDNSRGMNYETSMFNKVAALICEALNSIKVTQSDVASVLSKIVSVRHLENLVLRRENHQDVLFHSKELLLKSVLIAIGHSKEIETTATAEGGEIVFQNAAFTMWKLTYLEHKLMPILDQNFIEYKITLNEDKPISESHVKELIAELRWQYNKFAVITHGKGHYRVVKYSSVANHADRVYATFKSNNKNGNMIEFNLLDQRIIWQNWYAFTSSMKQGNTLEICKKLLFQKMKRESNPFKGLSTDRKMDEVSQIGI.

ATP is bound by residues 107–109 (SVR), Lys188, and 221–223 (HGK). Residues 205-241 (LIAELRWQYNKFAVITHGKGHYRVVKYSSVANHADRV) form an RNA-binding region. The active-site For NTPase and RTPase activities is the His225. Arg227 contacts ATP.

It belongs to the rotavirus NSP2 family. As to quaternary structure, homooctamer. Interacts with VP1; this interaction is weak. Interacts with NSP5; this interaction leads to up-regulation of NSP5 phosphorylation and formation of viral factories. Interacts with host DCP1A, DCP1B, DDX6, EDC4 and EIF2S1/eIF2-alpha; these interactions are probably part of the sequestration of some host SGs and PBs proteins in viral factories. It depends on Mg(2+) as a cofactor.

Its subcellular location is the host cytoplasm. Participates in replication and packaging of the viral genome. Plays a crucial role, together with NSP5, in the formation of virus factories (viroplasms) which are large inclusions in the host cytoplasm where replication intermediates are assembled and viral RNA replication takes place. Displays ssRNA binding, NTPase, RNA triphosphatase (RTPase) and ATP-independent helix-unwinding activities. The unwinding activity may prepare and organize plus-strand RNAs for packaging and replication by removing interfering secondary structures. The RTPase activity plays a role in the removal of the gamma-phosphate from the rotavirus RNA minus strands of dsRNA genome segments. Participates in the selective exclusion of host proteins from stress granules (SG) and P bodies (PB). Also participates in the sequestration of these remodeled organelles in viral factories. The protein is Non-structural protein 2 of Macaca mulatta (Rhesus macaque).